A 319-amino-acid chain; its full sequence is Ribonuclease Z (319 aa).

Positions 62, 64, 66, 67, 145, 216, and 274 each coordinate Zn(2+). Residue aspartate 66 is the Proton acceptor of the active site.

It belongs to the RNase Z family. In terms of assembly, homodimer. Requires Zn(2+) as cofactor.

It carries out the reaction Endonucleolytic cleavage of RNA, removing extra 3' nucleotides from tRNA precursor, generating 3' termini of tRNAs. A 3'-hydroxy group is left at the tRNA terminus and a 5'-phosphoryl group is left at the trailer molecule.. Zinc phosphodiesterase, which displays some tRNA 3'-processing endonuclease activity. Probably involved in tRNA maturation, by removing a 3'-trailer from precursor tRNA. The polypeptide is Ribonuclease Z (Synechococcus sp. (strain CC9605)).